A 279-amino-acid chain; its full sequence is MTQAYDGFVHLGFSNRNGRTISHKKYQEGNSRVSADNSDANGVPYYFLINMGGGFVEGEQYQVTIDVNKDAHALVTTQTPTYVYKCEKGQLTHQNTSITLEENSYLEYMADEVIPYLRSRYFQTSRIDMDKSAHLIYSDGVTAGWSHEDLPFQYHYFRNLTQIYQDDELVYSDQTLLEPQKQDMFKLGYFEGWRNYNSLVMVSPNIDEAFVKALQKHLENLNLESDFAISSLDIPGLVLRILGKTAEDNRRVIYSCADYFRQEIHGLTPLNLRKNDMRR.

Belongs to the UreD family. UreD, UreF and UreG form a complex that acts as a GTP-hydrolysis-dependent molecular chaperone, activating the urease apoprotein by helping to assemble the nickel containing metallocenter of UreC. The UreE protein probably delivers the nickel.

The protein resides in the cytoplasm. In terms of biological role, required for maturation of urease via the functional incorporation of the urease nickel metallocenter. The protein is Urease accessory protein UreD of Streptococcus salivarius (strain 57.I).